Consider the following 168-residue polypeptide: MAYQDEESKEYSEKVVKIDRVAKVVKGGRRFSFNALSVVGDQRGKVGIGFGKANEVPDAIRKSIESAKKHLVKINFKGHTIPHEVIGKFKSARVILKPSTAGTGIIAGASVRSIVEKAGIQDVLTKSWGSSNPVNIVKATLDALEQLETPILAAKKRGISLNKLFGKD.

The S5 DRBM domain occupies 11–74; that stretch reads YSEKVVKIDR…ESAKKHLVKI (64 aa).

This sequence belongs to the universal ribosomal protein uS5 family. As to quaternary structure, part of the 30S ribosomal subunit. Contacts proteins S4 and S8.

In terms of biological role, with S4 and S12 plays an important role in translational accuracy. Functionally, located at the back of the 30S subunit body where it stabilizes the conformation of the head with respect to the body. The chain is Small ribosomal subunit protein uS5 from Leptospira interrogans serogroup Icterohaemorrhagiae serovar copenhageni (strain Fiocruz L1-130).